Reading from the N-terminus, the 330-residue chain is Dof zinc finger protein DOF2.4 (330 aa).

The span at 14–25 shows a compositional bias: polar residues; sequence NWQQAPPSNYNH. The disordered stretch occupies residues 14 to 70; that stretch reads NWQQAPPSNYNHDGTGASANGGHVLRPQLQPQQQPQQQPHPNGSGGGGGGGGGSIRA. A compositionally biased stretch (low complexity) spans 40 to 55; that stretch reads PQLQPQQQPQQQPHPN. Gly residues predominate over residues 56–68; the sequence is GSGGGGGGGGGSI. Residues 89–143 form a Dof-type zinc finger; it reads LKCPRCESTNTKFCYFNNYSLTQPRHFCKTCRRYWTRGGALRNVPVGGGCRRNRR. Residues C91, C94, C116, and C119 each coordinate Zn(2+). 2 disordered regions span residues 133-165 and 255-276; these read PVGG…SFSS and QQSS…SANG. Positions 146 to 165 are enriched in low complexity; it reads SNSNNNNNSTATSNNTSFSS. Positions 265–276 are enriched in polar residues; that stretch reads EDSSNPNPSANG.

In terms of tissue distribution, specific to the vascular tissues. The PEAR proteins (e.g. DOF2.4, DOF5.1, DOF3.2, DOF1.1, DOF5.6 and DOF5.3) form a short-range concentration gradient that peaks at protophloem sieve elements (PSE).

Its subcellular location is the nucleus. The protein localises to the symplast. Its function is as follows. Transcription factor that binds specifically to a 5'-AA[AG]G-3' consensus core sequence. Probably involved in early processes for vascular development. The PEAR proteins (e.g. DOF2.4, DOF5.1, DOF3.2, DOF1.1, DOF5.6 and DOF5.3) activate gene expression that promotes radial growth of protophloem sieve elements. Triggers the transcription of HD-ZIP III genes, especially in the central domain of vascular tissue. In Arabidopsis thaliana (Mouse-ear cress), this protein is Dof zinc finger protein DOF2.4.